A 484-amino-acid chain; its full sequence is Protein nucleotidyltransferase YdiU (484 aa).

Residues G81, G83, R84, K103, D115, G116, R166, and R173 each coordinate ATP. D244 (proton acceptor) is an active-site residue. The Mg(2+) site is built by N245 and D254. D254 serves as a coordination point for ATP.

The protein belongs to the SELO family. Requires Mg(2+) as cofactor. Mn(2+) serves as cofactor.

It catalyses the reaction L-seryl-[protein] + ATP = 3-O-(5'-adenylyl)-L-seryl-[protein] + diphosphate. The enzyme catalyses L-threonyl-[protein] + ATP = 3-O-(5'-adenylyl)-L-threonyl-[protein] + diphosphate. It carries out the reaction L-tyrosyl-[protein] + ATP = O-(5'-adenylyl)-L-tyrosyl-[protein] + diphosphate. The catalysed reaction is L-histidyl-[protein] + UTP = N(tele)-(5'-uridylyl)-L-histidyl-[protein] + diphosphate. It catalyses the reaction L-seryl-[protein] + UTP = O-(5'-uridylyl)-L-seryl-[protein] + diphosphate. The enzyme catalyses L-tyrosyl-[protein] + UTP = O-(5'-uridylyl)-L-tyrosyl-[protein] + diphosphate. Functionally, nucleotidyltransferase involved in the post-translational modification of proteins. It can catalyze the addition of adenosine monophosphate (AMP) or uridine monophosphate (UMP) to a protein, resulting in modifications known as AMPylation and UMPylation. This is Protein nucleotidyltransferase YdiU from Shewanella sp. (strain MR-7).